The primary structure comprises 60 residues: Ferredoxin (60 aa).

4Fe-4S ferredoxin-type domains are found at residues 2–30 and 31–60; these read VTID…EIQG and DKVV…TVKE. Residues Cys9, Cys14, Cys17, Cys21, Cys41, Cys44, Cys47, and Cys51 each coordinate [4Fe-4S] cluster.

Requires [4Fe-4S] cluster as cofactor.

Functionally, ferredoxins are iron-sulfur proteins that transfer electrons probably in the CO-dehydrogenase complex. This Methanothermococcus thermolithotrophicus (Methanococcus thermolithotrophicus) protein is Ferredoxin.